The primary structure comprises 314 residues: Acetyl-coenzyme A carboxylase carboxyl transferase subunit alpha (314 aa).

The 258-residue stretch at 32–289 (EIDMLEASLE…KSAFVAQLDS (258 aa)) folds into the CoA carboxyltransferase C-terminal domain.

This sequence belongs to the AccA family. Acetyl-CoA carboxylase is a heterohexamer composed of biotin carboxyl carrier protein (AccB), biotin carboxylase (AccC) and two subunits each of ACCase subunit alpha (AccA) and ACCase subunit beta (AccD).

The protein resides in the cytoplasm. The catalysed reaction is N(6)-carboxybiotinyl-L-lysyl-[protein] + acetyl-CoA = N(6)-biotinyl-L-lysyl-[protein] + malonyl-CoA. Its pathway is lipid metabolism; malonyl-CoA biosynthesis; malonyl-CoA from acetyl-CoA: step 1/1. Component of the acetyl coenzyme A carboxylase (ACC) complex. First, biotin carboxylase catalyzes the carboxylation of biotin on its carrier protein (BCCP) and then the CO(2) group is transferred by the carboxyltransferase to acetyl-CoA to form malonyl-CoA. This chain is Acetyl-coenzyme A carboxylase carboxyl transferase subunit alpha, found in Staphylococcus aureus (strain JH9).